The following is a 494-amino-acid chain: 3-octaprenyl-4-hydroxybenzoate carboxy-lyase (494 aa).

Asn172 contacts Mn(2+). Prenylated FMN is bound by residues 175–177 (IYR), 189–191 (RWL), and 194–195 (RG). Glu238 is a binding site for Mn(2+). Catalysis depends on Asp287, which acts as the Proton donor.

It belongs to the UbiD family. As to quaternary structure, homohexamer. It depends on prenylated FMN as a cofactor. Mn(2+) is required as a cofactor.

Its subcellular location is the cell membrane. The catalysed reaction is a 4-hydroxy-3-(all-trans-polyprenyl)benzoate + H(+) = a 2-(all-trans-polyprenyl)phenol + CO2. It participates in cofactor biosynthesis; ubiquinone biosynthesis. Its function is as follows. Catalyzes the decarboxylation of 3-octaprenyl-4-hydroxy benzoate to 2-octaprenylphenol, an intermediate step in ubiquinone biosynthesis. The chain is 3-octaprenyl-4-hydroxybenzoate carboxy-lyase from Cronobacter sakazakii (strain ATCC BAA-894) (Enterobacter sakazakii).